Consider the following 115-residue polypeptide: MSEQAAEPNLDGPLDEALEELVSAEDFLNFFGVPFVPSVVQVNRLHIMQRYHDYLCQAGDIEHLQDAVRYAVYRKLLVRAYEDFVASDAQTEKVFKVFHMHEPQTTFVPIDQLLG.

Belongs to the NifW family. In terms of assembly, homotrimer; associates with NifD.

In terms of biological role, may protect the nitrogenase Fe-Mo protein from oxidative damage. The sequence is that of Nitrogenase-stabilizing/protective protein NifW from Stutzerimonas stutzeri (strain A1501) (Pseudomonas stutzeri).